Reading from the N-terminus, the 202-residue chain is FMN-dependent NADH:quinone oxidoreductase (202 aa).

FMN is bound by residues S10, 16–18, and 96–99; these read SHS and MYNF.

It belongs to the azoreductase type 1 family. Homodimer. FMN is required as a cofactor.

The enzyme catalyses 2 a quinone + NADH + H(+) = 2 a 1,4-benzosemiquinone + NAD(+). It catalyses the reaction N,N-dimethyl-1,4-phenylenediamine + anthranilate + 2 NAD(+) = 2-(4-dimethylaminophenyl)diazenylbenzoate + 2 NADH + 2 H(+). In terms of biological role, quinone reductase that provides resistance to thiol-specific stress caused by electrophilic quinones. Its function is as follows. Also exhibits azoreductase activity. Catalyzes the reductive cleavage of the azo bond in aromatic azo compounds to the corresponding amines. This chain is FMN-dependent NADH:quinone oxidoreductase, found in Hydrogenovibrio crunogenus (strain DSM 25203 / XCL-2) (Thiomicrospira crunogena).